We begin with the raw amino-acid sequence, 660 residues long: Nuclear factor erythroid 2-related factor 3 (660 aa).

A disordered region spans residues 120-214 (SAVGDGGQSA…KTEEHKMACA (95 aa)). Positions 123-135 (GDGGQSASAGGGD) are enriched in gly residues. Composition is skewed to basic and acidic residues over residues 173–186 (MLRE…HSSQ) and 204–214 (SKTEEHKMACA). Positions 541-604 (LIRDIRRRGK…DIMRQKLHGL (64 aa)) constitute a bZIP domain. The segment at 543-562 (RDIRRRGKNKVAAQNCRKRK) is basic motif. The tract at residues 566-573 (ILNLEDDI) is leucine-zipper.

Belongs to the bZIP family. CNC subfamily. As to quaternary structure, heterodimer with MAFG, MAFK and other small MAF proteins that binds to the MAF recognition elements (MARE). In terms of tissue distribution, high level expression in brain, thymus, testis and placenta. Medium level expression in uterus, stomach and lung. Low level expression in kidney. No expression in heart, liver, spleen and ovary.

It localises to the nucleus. In terms of biological role, activates erythroid-specific, globin gene expression. This Mus musculus (Mouse) protein is Nuclear factor erythroid 2-related factor 3 (Nfe2l3).